The sequence spans 149 residues: Limonene-1,2-epoxide hydrolase (149 aa).

The active-site Proton donor is aspartate 101. Residue aspartate 132 is the Proton acceptor of the active site.

The protein belongs to the limonene-1,2-epoxide hydrolase family. As to quaternary structure, monomer.

The catalysed reaction is limonene 1,2-epoxide + H2O = limonene-1,2-diol. Its pathway is terpene metabolism; (4R)-limonene degradation; (1S,4R)-1-hydroxylimonen-2-one from (4R)-limonene: step 2/3. Catalyzes the conversion of limonene-1,2-epoxide to limonene-1,2-diol. Can use both the (-) and (+) isomers of limonene-1,2-epoxide as substrates and also has some activity with 1-methylcyclohexene oxide, cyclohexene oxide and indene oxide as substrates. This is Limonene-1,2-epoxide hydrolase (limA) from Rhodococcus erythropolis (Arthrobacter picolinophilus).